The chain runs to 122 residues: Large ribosomal subunit protein bL12 (122 aa).

The protein belongs to the bacterial ribosomal protein bL12 family. As to quaternary structure, homodimer. Part of the ribosomal stalk of the 50S ribosomal subunit. Forms a multimeric L10(L12)X complex, where L10 forms an elongated spine to which 2 to 4 L12 dimers bind in a sequential fashion. Binds GTP-bound translation factors.

Functionally, forms part of the ribosomal stalk which helps the ribosome interact with GTP-bound translation factors. Is thus essential for accurate translation. This chain is Large ribosomal subunit protein bL12, found in Deinococcus radiodurans (strain ATCC 13939 / DSM 20539 / JCM 16871 / CCUG 27074 / LMG 4051 / NBRC 15346 / NCIMB 9279 / VKM B-1422 / R1).